Here is a 119-residue protein sequence, read N- to C-terminus: MITVLTAGFGAIWGAILRYGITNYGKKHWSEKFPYATLLINLTGAFLLGFIFSRKFSPFIYALIGTGVLGGYTTFSTLNVELLSHWRDRNYSVFTLYALLSYGGGLILVFLGYKVGTLI.

A run of 4 helical transmembrane segments spans residues 1–21, 33–53, 56–76, and 93–113; these read MITV…RYGI, FPYA…FIFS, FSPF…TTFS, and VFTL…FLGY. Positions 70 and 73 each coordinate Na(+).

The protein belongs to the fluoride channel Fluc/FEX (TC 1.A.43) family.

Its subcellular location is the cell membrane. It carries out the reaction fluoride(in) = fluoride(out). With respect to regulation, na(+) is not transported, but it plays an essential structural role and its presence is essential for fluoride channel function. Functionally, fluoride-specific ion channel. Important for reducing fluoride concentration in the cell, thus reducing its toxicity. This is Fluoride-specific ion channel FluC 2 from Lactobacillus johnsonii (strain CNCM I-12250 / La1 / NCC 533).